The primary structure comprises 172 residues: LOB domain-containing protein 4 (172 aa).

Residues Ser-12–Val-113 form the LOB domain. The tract at residues Pro-125–Gly-152 is disordered. Low complexity predominate over residues Pro-131–Pro-147.

The protein belongs to the LOB domain-containing protein family. Expressed in young shoots, roots, stems, leaves and flowers.

This Arabidopsis thaliana (Mouse-ear cress) protein is LOB domain-containing protein 4 (LBD4).